A 428-amino-acid polypeptide reads, in one-letter code: MEEVTSCSFSSPLFQQEDKRGVTYRIPALIYVPPAHTFLAFAEKRSSSKDEDALHLVLRRGLRTGQSVQWEPLKSLMKATLPGHRTMNPCPVWERKSGYVYLFFICVQGHVTERQQIMSGRNPARLCFICSQDAGYSWSDVRDLTEEVIGPEVTHWATFAVGPGHGIQLQSGRLIIPAYAYYIPFWFFCFRLPYRARPHSLMIYSDDLGATWHHGRLIKPMVTVECEVAEVIGKAGHPVLYCSARTPNRHRAEALSIDHGECFQKPVLSHQLCEPPHGCQGSVVSFCPLEIPGGCQDLAGEDAPAIQQSPLLCSSVRPEPEAGTLSESWLLYSHPTNKKRRVDLGIYLNQSPLEAACWSRPWILHCGPCGYSDLAALENEGLFGCLFECGTKQECEQIAFRLFTDREILSHVQGDCSTPGMNSEPSKK.

The FRIP motif motif lies at 24 to 27 (YRIP). Residues Arg-25 and Arg-45 each coordinate substrate. Asp-50 acts as the Proton acceptor in catalysis. One copy of the BNR 1 repeat lies at 129–140 (ICSQDAGYSWSD). 2 residues coordinate substrate: Tyr-179 and Tyr-181. The BNR 2 repeat unit spans residues 203 to 214 (IYSDDLGATWHH). Substrate contacts are provided by Glu-225 and Arg-245. The stretch at 254–265 (ALSIDHGECFQK) is one BNR 3 repeat. Phosphoserine is present on Ser-314. Arg-341 contacts substrate. The Nucleophile role is filled by Tyr-371. Glu-388 is an active-site residue.

This sequence belongs to the glycosyl hydrolase 33 family. Interacts with CAV1; this interaction enhances NEU3 sialidase activity within caveola. Interacts with EGFR; this interaction mediates desialylation of EGFR and enhances downstream signaling. Palmitoylated; may regulate intracellular trafficking and anchorage to plasma membrane and endomembranes. As to expression, expressed in brain.

The protein localises to the cell membrane. Its subcellular location is the membrane. It localises to the caveola. The protein resides in the early endosome membrane. It is found in the recycling endosome membrane. The protein localises to the lysosome membrane. It carries out the reaction Hydrolysis of alpha-(2-&gt;3)-, alpha-(2-&gt;6)-, alpha-(2-&gt;8)- glycosidic linkages of terminal sialic acid residues in oligosaccharides, glycoproteins, glycolipids, colominic acid and synthetic substrates.. The enzyme catalyses a ganglioside GD1a + H2O = a ganglioside GM1 + N-acetylneuraminate. The catalysed reaction is a ganglioside GD1a (d18:1(4E)) + H2O = a ganglioside GM1 (d18:1(4E)) + N-acetylneuraminate. It catalyses the reaction a ganglioside GD1b + H2O = a ganglioside GM1 + N-acetylneuraminate. It carries out the reaction a ganglioside GD1b (d18:1(4E)) + H2O = a ganglioside GM1 (d18:1(4E)) + N-acetylneuraminate. The enzyme catalyses a ganglioside GD3 + H2O = a ganglioside GM3 + N-acetylneuraminate. The catalysed reaction is a ganglioside GD3 (d18:1(4E)) + H2O = a ganglioside GM3 (d18:1(4E)) + N-acetylneuraminate. It catalyses the reaction a ganglioside GM3 + H2O = a beta-D-galactosyl-(1-&gt;4)-beta-D-glucosyl-(1&lt;-&gt;1)-ceramide + N-acetylneuraminate. It carries out the reaction a ganglioside GM1 + H2O = a ganglioside GA1 + N-acetylneuraminate. The enzyme catalyses a ganglioside GM1 (d18:1(4E)) + H2O = a ganglioside GA1 (d18:1(4E)) + N-acetylneuraminate. The catalysed reaction is a ganglioside GM2 (d18:1(4E)) + H2O = a ganglioside GA2 (d18:1(4E)) + N-acetylneuraminate. It catalyses the reaction a ganglioside GM3 (d18:1(4E)) + H2O = a beta-D-Gal-(1-&gt;4)-beta-D-Glc-(1&lt;-&gt;1)-Cer(d18:1(4E)) + N-acetylneuraminate. It carries out the reaction a ganglioside GT1b + H2O = a ganglioside GD1b + N-acetylneuraminate. Exo-alpha-sialidase that catalyzes the hydrolytic cleavage of the terminal sialic acid (N-acetylneuraminic acid, Neu5Ac) of a glycan moiety in the catabolism of glycolipids, glycoproteins and oligosacharides. Displays high catalytic efficiency for gangliosides including alpha-(2-&gt;3)-sialylated GD1a and GM3 and alpha-(2-&gt;8)-sialylated GD3. Plays a role in the regulation of transmembrane signaling through the modulation of ganglioside content of the lipid bilayer and by direct interaction with signaling receptors, such as EGFR. Desialylates EGFR and activates downstream signaling in proliferating cells. Contributes to clathrin-mediated endocytosis by regulating sorting of endocytosed receptors to early and recycling endosomes. The polypeptide is Sialidase-3 (NEU3) (Bos taurus (Bovine)).